A 160-amino-acid polypeptide reads, in one-letter code: Large ribosomal subunit protein bL19 (160 aa).

2 stretches are compositionally biased toward basic and acidic residues: residues Met1–Ser15 and Ala28–Ser39. The segment at Met1–Ser44 is disordered.

The protein belongs to the bacterial ribosomal protein bL19 family.

Its function is as follows. This protein is located at the 30S-50S ribosomal subunit interface and may play a role in the structure and function of the aminoacyl-tRNA binding site. The polypeptide is Large ribosomal subunit protein bL19 (Prochlorococcus marinus (strain SARG / CCMP1375 / SS120)).